The primary structure comprises 279 residues: MKAYLDLMQDVVDNGFDKGDRTGVGTRSVFGRQMRFNLQDGFPLVTTKKVHLRSIIYELLWFLKGSTDNTWLAERKVSIWNEWALENGDLGPIYGKQWRSWQCHDGRVIDQISEVIEQIRTKPNSRRLIVSAWNPAELPDESISPQDNVREGRMALAPCHCLFQFYVADGKLSCQLYQRSADLFLGVPFNIASYALLTHMIAQQCDLDVGEFVHTFGDCHLYRNHLTDDIVFEQLRREPRALPKLVIKRKPESIFGYELEDFEFEGYDPSPVIKAPIAI.

Arg21 provides a ligand contact to dUMP. (6R)-5,10-methylene-5,6,7,8-tetrahydrofolate is bound at residue His51. Residue Arg126–Arg127 coordinates dUMP. Catalysis depends on Cys159, which acts as the Nucleophile. DUMP contacts are provided by residues Arg179 to Asp182, Asn190, and His220 to Tyr222. Asp182 provides a ligand contact to (6R)-5,10-methylene-5,6,7,8-tetrahydrofolate. Residue Ala278 coordinates (6R)-5,10-methylene-5,6,7,8-tetrahydrofolate.

Belongs to the thymidylate synthase family. Bacterial-type ThyA subfamily. As to quaternary structure, homodimer.

The protein resides in the cytoplasm. The enzyme catalyses dUMP + (6R)-5,10-methylene-5,6,7,8-tetrahydrofolate = 7,8-dihydrofolate + dTMP. It participates in pyrimidine metabolism; dTTP biosynthesis. Catalyzes the reductive methylation of 2'-deoxyuridine-5'-monophosphate (dUMP) to 2'-deoxythymidine-5'-monophosphate (dTMP) while utilizing 5,10-methylenetetrahydrofolate (mTHF) as the methyl donor and reductant in the reaction, yielding dihydrofolate (DHF) as a by-product. This enzymatic reaction provides an intracellular de novo source of dTMP, an essential precursor for DNA biosynthesis. The chain is Thymidylate synthase from Marinobacter nauticus (strain ATCC 700491 / DSM 11845 / VT8) (Marinobacter aquaeolei).